The chain runs to 343 residues: Small ribosomal subunit biogenesis GTPase RsgA (343 aa).

The CP-type G domain occupies 116–275 (RGQLKPVAAN…LIDSPGIREF (160 aa)). Residues 163-166 (NKAD) and 217-225 (GQSGVGKSS) contribute to the GTP site. Residues cysteine 299, cysteine 304, histidine 306, and cysteine 312 each contribute to the Zn(2+) site.

The protein belongs to the TRAFAC class YlqF/YawG GTPase family. RsgA subfamily. As to quaternary structure, monomer. Associates with 30S ribosomal subunit, binds 16S rRNA. The cofactor is Zn(2+).

The protein resides in the cytoplasm. In terms of biological role, one of several proteins that assist in the late maturation steps of the functional core of the 30S ribosomal subunit. Helps release RbfA from mature subunits. May play a role in the assembly of ribosomal proteins into the subunit. Circularly permuted GTPase that catalyzes slow GTP hydrolysis, GTPase activity is stimulated by the 30S ribosomal subunit. This Pseudomonas syringae pv. tomato (strain ATCC BAA-871 / DC3000) protein is Small ribosomal subunit biogenesis GTPase RsgA.